Reading from the N-terminus, the 644-residue chain is Protein cueball (644 aa).

A signal peptide spans 1–26; that stretch reads MIRIRFGMDVLLVLLLATCLLTPAHG. The Extracellular portion of the chain corresponds to 27–531; that stretch reads TPLEWDFAVT…VCLTPRVWTS (505 aa). Asn-82 and Asn-108 each carry an N-linked (GlcNAc...) asparagine glycan. 3 LDL-receptor class B repeats span residues 121–166, 167–211, and 212–257; these read MNLF…DVCR, RKLY…DQLS, and DRLF…TNDA. Asn-175 and Asn-190 each carry an N-linked (GlcNAc...) asparagine glycan. Residues 280–301 are disordered; it reads TTTSKPEEEDSTDSTDFTDPEP. Acidic residues predominate over residues 286-301; sequence EEEDSTDSTDFTDPEP. An N-linked (GlcNAc...) asparagine glycan is attached at Asn-313. EGF-like domains are found at residues 398–430 and 433–471; these read EIRECHNYCVHGTCQMSELAYPKCYCQPGFTGE and ELSVCSGLCLNGGHCRVSKDENEAPSCECPAKFGGARCE. Disulfide bonds link Cys-402/Cys-411, Cys-406/Cys-421, Cys-437/Cys-447, Cys-441/Cys-459, and Cys-461/Cys-470. N-linked (GlcNAc...) asparagine glycosylation is found at Asn-473 and Asn-508. A helical transmembrane segment spans residues 532–552; that stretch reads SVIIILVVGIVSSLLLVAVIV. Topologically, residues 553-644 are cytoplasmic; the sequence is HGIRRLYKPK…LIHNMEDDLY (92 aa).

It belongs to the cueball family.

It is found in the cell membrane. Functionally, has a role in spermatogenesis and oogenesis. This chain is Protein cueball, found in Drosophila sechellia (Fruit fly).